The chain runs to 160 residues: Surface-adhesin protein E (160 aa).

The first 15 residues, 1–15 (MKKIILTLSLGLLTA), serve as a signal peptide directing secretion. C16 is lipidated: N-palmitoyl cysteine. The S-diacylglycerol cysteine moiety is linked to residue C16.

It is found in the cell outer membrane. Its subcellular location is the cell surface. Functionally, acts as a multifunctional adhesin involved in direct interactions with host epithelial cells and host proteins. This is Surface-adhesin protein E (pe) from Haemophilus influenzae (strain ATCC 51907 / DSM 11121 / KW20 / Rd).